The chain runs to 506 residues: Protein MGF 505-4R (506 aa).

It belongs to the asfivirus MGF 505 family.

In terms of biological role, plays a role in virus cell tropism, and may be required for efficient virus replication in macrophages. The protein is Protein MGF 505-4R of Ornithodoros (relapsing fever ticks).